Here is a 100-residue protein sequence, read N- to C-terminus: NADH-quinone oxidoreductase subunit K 2 (100 aa).

3 helical membrane-spanning segments follow: residues 4-24 (LHSY…GVLI), 29-49 (IVIF…FIAL), and 60-80 (IFVF…LALM).

Belongs to the complex I subunit 4L family. As to quaternary structure, NDH-1 is composed of 14 different subunits. Subunits NuoA, H, J, K, L, M, N constitute the membrane sector of the complex.

The protein localises to the cell inner membrane. It catalyses the reaction a quinone + NADH + 5 H(+)(in) = a quinol + NAD(+) + 4 H(+)(out). Functionally, NDH-1 shuttles electrons from NADH, via FMN and iron-sulfur (Fe-S) centers, to quinones in the respiratory chain. The immediate electron acceptor for the enzyme in this species is believed to be ubiquinone. Couples the redox reaction to proton translocation (for every two electrons transferred, four hydrogen ions are translocated across the cytoplasmic membrane), and thus conserves the redox energy in a proton gradient. The protein is NADH-quinone oxidoreductase subunit K 2 of Geobacter metallireducens (strain ATCC 53774 / DSM 7210 / GS-15).